We begin with the raw amino-acid sequence, 433 residues long: Serine/threonine-protein kinase Sgk1 (433 aa).

The tract at residues 66 to 92 is disordered; the sequence is QDVELMNSNPSPPPSPSQQINLGPSSN. Over residues 83-92 the composition is skewed to polar residues; it reads QQINLGPSSN. Positions 100–357 constitute a Protein kinase domain; sequence FDFLKVIGKG…FTEIKNHMFF (258 aa). ATP is bound by residues 106 to 114 and K129; that span reads IGKGSFGKV. D224 acts as the Proton acceptor in catalysis. The AGC-kinase C-terminal domain occupies 358 to 433; sequence SPINWDDLNA…SYAPAMDSYL (76 aa).

It belongs to the protein kinase superfamily. AGC Ser/Thr protein kinase family.

The protein localises to the cytoplasm. It localises to the nucleus. Its subcellular location is the endoplasmic reticulum. It catalyses the reaction L-seryl-[protein] + ATP = O-phospho-L-seryl-[protein] + ADP + H(+). The catalysed reaction is L-threonyl-[protein] + ATP = O-phospho-L-threonyl-[protein] + ADP + H(+). Protein kinase that may play an important role in cellular stress response. May be involved in the regulation of processes such as cell survival, neuronal excitability and renal sodium excretion. This is Serine/threonine-protein kinase Sgk1 (sgk1) from Danio rerio (Zebrafish).